A 328-amino-acid polypeptide reads, in one-letter code: Small neutral protease regulatory protein (328 aa).

One can recognise an HTH lysR-type domain in the interval 1-60 (MELEVRHLRALCAIADAGSLHRAARRLGVAQPTLSTQLTRIEQALGGPLFTRERTGCRPT). Residues 20–39 (LHRAARRLGVAQPTLSTQLT) constitute a DNA-binding region (H-T-H motif).

Belongs to the LysR transcriptional regulatory family.

Transcriptional trans-activator of the gene (mprA) for the small neutral protease. This chain is Small neutral protease regulatory protein (mprR), found in Streptomyces coelicolor (strain ATCC BAA-471 / A3(2) / M145).